Here is a 102-residue protein sequence, read N- to C-terminus: UPF0751 protein DSY4013 (102 aa).

Belongs to the UPF0751 family.

This Desulfitobacterium hafniense (strain Y51) protein is UPF0751 protein DSY4013.